The sequence spans 95 residues: UPF0213 protein ESA_03545 (95 aa).

In terms of domain architecture, GIY-YIG spans 2–77 (EEWFLYLIRC…KQLTKRQKEQ (76 aa)).

It belongs to the UPF0213 family.

The polypeptide is UPF0213 protein ESA_03545 (Cronobacter sakazakii (strain ATCC BAA-894) (Enterobacter sakazakii)).